Reading from the N-terminus, the 514-residue chain is Peptide chain release factor 3 (514 aa).

Residues 8-268 enclose the tr-type G domain; it reads KKRRTFAIIS…TFLKFAPEPH (261 aa). Residues 17 to 24, 85 to 89, and 139 to 142 each bind GTP; these read SHPDAGKT, DTPGH, and NKLD.

The protein belongs to the TRAFAC class translation factor GTPase superfamily. Classic translation factor GTPase family. PrfC subfamily.

The protein localises to the cytoplasm. Its function is as follows. Increases the formation of ribosomal termination complexes and stimulates activities of RF-1 and RF-2. It binds guanine nucleotides and has strong preference for UGA stop codons. It may interact directly with the ribosome. The stimulation of RF-1 and RF-2 is significantly reduced by GTP and GDP, but not by GMP. This chain is Peptide chain release factor 3, found in Streptococcus thermophilus (strain CNRZ 1066).